A 209-amino-acid chain; its full sequence is Guanylate kinase (209 aa).

The Guanylate kinase-like domain occupies 7–185 (GNLYIVAAPS…AAMELQSIVI (179 aa)). 14 to 21 (APSGGGKT) lines the ATP pocket.

Belongs to the guanylate kinase family.

It localises to the cytoplasm. The catalysed reaction is GMP + ATP = GDP + ADP. Its function is as follows. Essential for recycling GMP and indirectly, cGMP. The sequence is that of Guanylate kinase from Legionella pneumophila (strain Paris).